The chain runs to 304 residues: Probable aquaporin NIP5-1 (304 aa).

The next 2 helical transmembrane spans lie at 80–100 (LGAEFVGTFILIFTATAGPIV) and 106–126 (GAETLIGNAACAGLAVMIIIL). The NPA 1 motif lies at 137–139 (NPS). Helical transmembrane passes span 157–177 (AYIAAQVSASICASFALKGVF), 195–215 (AFALEFIITFILLFVVTAVAT), and 219–239 (AVGELAGIAVGATVMLNILVA). An NPA 2 motif is present at residues 248-250 (NPV). Residues 266 to 286 (WVYLVAPTLGAISGAAVYTGV) traverse the membrane as a helical segment. At S301 the chain carries Phosphoserine.

It belongs to the MIP/aquaporin (TC 1.A.8) family. NIP (TC 1.A.8.12) subfamily. In terms of tissue distribution, expressed in rosette leaves.

It localises to the cell membrane. In terms of biological role, boric acid transporter. Low water transport activity. Plays an important role as plasma membrane boric acid channel for the boron uptake required for plant growth and development under boron limitation. The protein is Probable aquaporin NIP5-1 (NIP5-1) of Arabidopsis thaliana (Mouse-ear cress).